The chain runs to 418 residues: Putative ion-transport protein YfeO (418 aa).

Helical transmembrane passes span 10-30, 54-74, 99-119, 120-140, 149-169, 186-206, 223-243, 258-278, 300-320, 322-342, 343-363, and 371-391; these read LLLS…LIVV, DSPF…GLVI, ALLG…SLGP, EHPI…RLLP, ILAS…AALI, LFAP…FFHP, ILSG…AVWC, VLVL…GGPV, DYFL…ASGF, GGRI…LHEH, VPAV…VLVV, and LFMA…CIVM.

The protein belongs to the chloride channel (TC 2.A.49) family.

The protein resides in the cell membrane. The polypeptide is Putative ion-transport protein YfeO (Escherichia coli O17:K52:H18 (strain UMN026 / ExPEC)).